The following is a 294-amino-acid chain: Melanocortin receptor 5 (294 aa).

Residues 1 to 29 (FLDLQLNATEGNVSGPSVGNTSSPCEDMG) are Extracellular-facing. N-linked (GlcNAc...) asparagine glycans are attached at residues Asn7, Asn12, and Asn20. A helical membrane pass occupies residues 30–53 (IEVEVFLTLGLISLLENILVIGAI). The Cytoplasmic segment spans residues 54-65 (ARNKNLHVPMYF). The chain crosses the membrane as a helical span at residues 66 to 89 (FVCSLAVADMLVSLSNSWETITIY). Topologically, residues 90–106 (LIANKHLVLSDTSVRHL) are extracellular. The helical transmembrane segment at 107–130 (DNVFDSMICISLVASMCSLLAVAV) threads the bilayer. At 131-147 (DRYVTIFYALRYQHLMT) the chain is on the cytoplasmic side. Residues 148–171 (GRRCGAIIAGIWALCTGCGPVFIV) traverse the membrane as a helical segment. The Extracellular portion of the chain corresponds to 172-178 (YYESTYV). A helical transmembrane segment spans residues 179–203 (VVCLVAMFLTMLLLMASLYAHMFLQ). Over 204–231 (ARAHVRRIAALPGYRSARQRTSMKGAVT) the chain is Cytoplasmic. Residues 232 to 257 (LAMLLGVFIVCWAPFFLHLILMISCP) traverse the membrane as a helical segment. Residues 258-265 (QNLYCSCF) lie on the Extracellular side of the membrane. A helical transmembrane segment spans residues 266-289 (MSHFNMYLILIMCNSVIDPLIYAF). The Cytoplasmic segment spans residues 290 to 294 (RSQEK).

The protein belongs to the G-protein coupled receptor 1 family.

The protein resides in the cell membrane. Receptor for MSH (alpha, beta and gamma) and ACTH. The activity of this receptor is mediated by G proteins which activate adenylate cyclase. This receptor is a possible mediator of the immunomodulation properties of melanocortins. The protein is Melanocortin receptor 5 (MC5R) of Sus scrofa (Pig).